The primary structure comprises 66 residues: uncharacterized protein (66 aa).

Transmembrane regions (helical) follow at residues 3-23 (LIHV…PFAN) and 34-54 (FILA…AIVY).

The protein localises to the cell membrane. This is an uncharacterized protein from Bacillus subtilis (strain 168).